The sequence spans 436 residues: Chorion-specific transcription factor GCMa (436 aa).

The GCM DNA-binding region spans 14–169 (LSWDINDVKL…KLEAEARRAM (156 aa)). Residues Cys-76, Cys-82, Cys-86, Cys-113, Cys-116, Cys-125, His-152, and His-154 each contribute to the Zn(2+) site. Residues 171 to 202 (KVNTAPSSVSLSLKGSTETRSLPGETQSQGSL) are disordered. The span at 174–202 (TAPSSVSLSLKGSTETRSLPGETQSQGSL) shows a compositional bias: polar residues.

Polyubiquitinated in the presence of UBE2D2 and FBXW2 (in vitro). In terms of tissue distribution, highly expressed in the placenta. Expressed in trophoblast cells of the villi.

The protein resides in the nucleus. Transcription factor involved in the control of expression of placental growth factor (PGF) and other placenta-specific genes. Binds to the trophoblast-specific element 2 (TSE2) of the aromatase gene enhancer. Binds to the SYDE1 promoter. Has a central role in mediating the differentiation of trophoblast cells along both the villous and extravillous pathways in placental development. In Homo sapiens (Human), this protein is Chorion-specific transcription factor GCMa (GCM1).